The sequence spans 261 residues: Indole-3-glycerol phosphate synthase (261 aa).

It belongs to the TrpC family.

The catalysed reaction is 1-(2-carboxyphenylamino)-1-deoxy-D-ribulose 5-phosphate + H(+) = (1S,2R)-1-C-(indol-3-yl)glycerol 3-phosphate + CO2 + H2O. Its pathway is amino-acid biosynthesis; L-tryptophan biosynthesis; L-tryptophan from chorismate: step 4/5. This Burkholderia cenocepacia (strain HI2424) protein is Indole-3-glycerol phosphate synthase.